Here is a 408-residue protein sequence, read N- to C-terminus: 3-hydroxy-3-methylglutaryl-coenzyme A reductase (408 aa).

Catalysis depends on charge relay system residues E101 and D307. The active-site Proton donor is the H403.

Belongs to the HMG-CoA reductase family.

It catalyses the reaction (R)-mevalonate + 2 NADP(+) + CoA = (3S)-3-hydroxy-3-methylglutaryl-CoA + 2 NADPH + 2 H(+). It participates in metabolic intermediate biosynthesis; (R)-mevalonate biosynthesis; (R)-mevalonate from acetyl-CoA: step 3/3. Converts HMG-CoA to mevalonate. The protein is 3-hydroxy-3-methylglutaryl-coenzyme A reductase (hmgA) of Pyrococcus abyssi (strain GE5 / Orsay).